The following is a 344-amino-acid chain: Heat-inducible transcription repressor HrcA (344 aa).

This sequence belongs to the HrcA family.

In terms of biological role, negative regulator of class I heat shock genes (grpE-dnaK-dnaJ and groELS operons). Prevents heat-shock induction of these operons. In Streptococcus agalactiae serotype III (strain NEM316), this protein is Heat-inducible transcription repressor HrcA.